The chain runs to 748 residues: Bifunctional lysine-specific demethylase and histidyl-hydroxylase NO66 (748 aa).

Disordered stretches follow at residues 65–135 and 160–264; these read NIDR…RSTY and TEVV…DDEG. Residues 94–110 are compositionally biased toward basic and acidic residues; sequence LENKKPKVEVKKEDEKS. Over residues 124-134 the composition is skewed to polar residues; sequence LVQNETSTRST. Residues 163–193 show a composition bias toward acidic residues; the sequence is VESDDEQMIGLDSDEELEDEDETDIDEDEMM. A compositionally biased stretch (basic and acidic residues) spans 194–203; the sequence is IDPKDIERYI. Positions 207 to 264 are enriched in acidic residues; that stretch reads SVEDEEDMEDEEIEDEEFEDEEFEDEEEEADEQEEEEEDVSDEESVVSEMDADSDDEG. One can recognise a JmjC domain in the interval 399-543; sequence QLVNPQTYDD…NLMEKVVPEA (145 aa). Residues H442, D444, and H509 each coordinate Fe cation.

The protein belongs to the ROX family. NO66 subfamily. It depends on Fe(2+) as a cofactor.

The protein localises to the nucleus. It carries out the reaction N(6),N(6)-dimethyl-L-lysyl(36)-[histone H3] + 2 2-oxoglutarate + 2 O2 = L-lysyl(36)-[histone H3] + 2 formaldehyde + 2 succinate + 2 CO2. In terms of biological role, oxygenase that can act as both a histone lysine demethylase and a ribosomal histidine hydroxylase. Specifically demethylates 'Lys-4' (H3K4me) and 'Lys-36' (H3K36me) of histone H3, thereby playing a central role in histone code. Mediates response to multiple stress stimuli, including heat shock and osmotic, oxidative, and ethanol stress. The protein is Bifunctional lysine-specific demethylase and histidyl-hydroxylase NO66 (jmjc-1) of Caenorhabditis elegans.